Reading from the N-terminus, the 60-residue chain is Metallothionein A (60 aa).

The tract at residues Met1–Cys28 is beta. Cys4, Cys6, Cys12, Cys14, Cys18, Cys20, Cys23, Cys25, Cys28, Cys32, Cys33, Cys35, Cys36, Cys40, Cys43, Cys47, Cys49, Cys54, Cys58, and Cys59 together coordinate a divalent metal cation. Positions Lys29 to Gln60 are alpha.

The protein belongs to the metallothionein superfamily. Type 1 family.

In terms of biological role, metallothioneins have a high content of cysteine residues that bind various heavy metals. The polypeptide is Metallothionein A (mta) (Cyprinodon sp. (Pupfish)).